Reading from the N-terminus, the 141-residue chain is MAIERTLSIIKPDAVAKNVIGQIYSRFEGAGLKIVAARMTQLSRAEAEGFYAVHSARPFFKDLVDFMISGPVIIQVLEGENAIIKHRDLMGATDPKKADKGTIRADFADSIDANAVHGSDAEETAKVEIAYYFPALNVYSR.

ATP is bound by residues Lys11, Phe59, Arg87, Thr93, Arg104, and Asn114. His117 (pros-phosphohistidine intermediate) is an active-site residue.

It belongs to the NDK family. In terms of assembly, homotetramer. Mg(2+) is required as a cofactor.

The protein resides in the cytoplasm. It catalyses the reaction a 2'-deoxyribonucleoside 5'-diphosphate + ATP = a 2'-deoxyribonucleoside 5'-triphosphate + ADP. It carries out the reaction a ribonucleoside 5'-diphosphate + ATP = a ribonucleoside 5'-triphosphate + ADP. Major role in the synthesis of nucleoside triphosphates other than ATP. The ATP gamma phosphate is transferred to the NDP beta phosphate via a ping-pong mechanism, using a phosphorylated active-site intermediate. The sequence is that of Nucleoside diphosphate kinase from Janthinobacterium sp. (strain Marseille) (Minibacterium massiliensis).